A 258-amino-acid chain; its full sequence is Imidazole glycerol phosphate synthase subunit HisF (258 aa).

Catalysis depends on residues D12 and D131.

It belongs to the HisA/HisF family. Heterodimer of HisH and HisF.

It localises to the cytoplasm. The enzyme catalyses 5-[(5-phospho-1-deoxy-D-ribulos-1-ylimino)methylamino]-1-(5-phospho-beta-D-ribosyl)imidazole-4-carboxamide + L-glutamine = D-erythro-1-(imidazol-4-yl)glycerol 3-phosphate + 5-amino-1-(5-phospho-beta-D-ribosyl)imidazole-4-carboxamide + L-glutamate + H(+). It functions in the pathway amino-acid biosynthesis; L-histidine biosynthesis; L-histidine from 5-phospho-alpha-D-ribose 1-diphosphate: step 5/9. IGPS catalyzes the conversion of PRFAR and glutamine to IGP, AICAR and glutamate. The HisF subunit catalyzes the cyclization activity that produces IGP and AICAR from PRFAR using the ammonia provided by the HisH subunit. This is Imidazole glycerol phosphate synthase subunit HisF from Corynebacterium diphtheriae (strain ATCC 700971 / NCTC 13129 / Biotype gravis).